The sequence spans 394 residues: Elongation factor Tu (394 aa).

The region spanning 10–204 (KPHVNIGTIG…AVDSWIPLPE (195 aa)) is the tr-type G domain. Residues 19–26 (GHVDHGKT) form a G1 region. A GTP-binding site is contributed by 19 to 26 (GHVDHGKT). A Mg(2+)-binding site is contributed by Thr-26. Residues 60 to 64 (GITIN) form a G2 region. Residues 81–84 (DCPG) are G3. Residues 81 to 85 (DCPGH) and 136 to 139 (NKCD) contribute to the GTP site. Residues 136-139 (NKCD) are G4. The tract at residues 174–176 (SGL) is G5.

This sequence belongs to the TRAFAC class translation factor GTPase superfamily. Classic translation factor GTPase family. EF-Tu/EF-1A subfamily. As to quaternary structure, monomer.

It localises to the cytoplasm. It carries out the reaction GTP + H2O = GDP + phosphate + H(+). GTP hydrolase that promotes the GTP-dependent binding of aminoacyl-tRNA to the A-site of ribosomes during protein biosynthesis. This Ureaplasma parvum serovar 3 (strain ATCC 27815 / 27 / NCTC 11736) protein is Elongation factor Tu.